Here is a 179-residue protein sequence, read N- to C-terminus: Large ribosomal subunit protein uL5 (179 aa).

Belongs to the universal ribosomal protein uL5 family. Part of the 50S ribosomal subunit; part of the 5S rRNA/L5/L18/L25 subcomplex. Contacts the 5S rRNA and the P site tRNA. Forms a bridge to the 30S subunit in the 70S ribosome.

Its function is as follows. This is one of the proteins that bind and probably mediate the attachment of the 5S RNA into the large ribosomal subunit, where it forms part of the central protuberance. In the 70S ribosome it contacts protein S13 of the 30S subunit (bridge B1b), connecting the 2 subunits; this bridge is implicated in subunit movement. Contacts the P site tRNA; the 5S rRNA and some of its associated proteins might help stabilize positioning of ribosome-bound tRNAs. This Sodalis glossinidius (strain morsitans) protein is Large ribosomal subunit protein uL5.